Reading from the N-terminus, the 50-residue chain is Tubulin alpha chain (50 aa).

Asn28 serves as a coordination point for GTP. The active site involves Glu40.

It belongs to the tubulin family. Dimer of alpha and beta chains. A typical microtubule is a hollow water-filled tube with an outer diameter of 25 nm and an inner diameter of 15 nM. Alpha-beta heterodimers associate head-to-tail to form protofilaments running lengthwise along the microtubule wall with the beta-tubulin subunit facing the microtubule plus end conferring a structural polarity. Microtubules usually have 13 protofilaments but different protofilament numbers can be found in some organisms and specialized cells. It depends on Mg(2+) as a cofactor.

Its subcellular location is the cytoplasm. The protein resides in the cytoskeleton. The enzyme catalyses GTP + H2O = GDP + phosphate + H(+). Its function is as follows. Tubulin is the major constituent of microtubules, a cylinder consisting of laterally associated linear protofilaments composed of alpha- and beta-tubulin heterodimers. Microtubules grow by the addition of GTP-tubulin dimers to the microtubule end, where a stabilizing cap forms. Below the cap, tubulin dimers are in GDP-bound state, owing to GTPase activity of alpha-tubulin. The protein is Tubulin alpha chain of Populus euphratica (Euphrates poplar).